Consider the following 257-residue polypeptide: UPF0246 protein Rsph17025_0016 (257 aa).

It belongs to the UPF0246 family.

The chain is UPF0246 protein Rsph17025_0016 from Cereibacter sphaeroides (strain ATCC 17025 / ATH 2.4.3) (Rhodobacter sphaeroides).